Consider the following 246-residue polypeptide: Exosome complex component Rrp41 (246 aa).

Belongs to the RNase PH family. Rrp41 subfamily. In terms of assembly, component of the archaeal exosome complex. Forms a hexameric ring-like arrangement composed of 3 Rrp41-Rrp42 heterodimers. The hexameric ring associates with a trimer of Rrp4 and/or Csl4 subunits.

It is found in the cytoplasm. Catalytic component of the exosome, which is a complex involved in RNA degradation. Has 3'-&gt;5' exoribonuclease activity. Can also synthesize heteromeric RNA-tails. This chain is Exosome complex component Rrp41, found in Pyrobaculum islandicum (strain DSM 4184 / JCM 9189 / GEO3).